The following is a 312-amino-acid chain: Phosphoribosylaminoimidazole-succinocarboxamide synthase (312 aa).

It belongs to the SAICAR synthetase family.

The catalysed reaction is 5-amino-1-(5-phospho-D-ribosyl)imidazole-4-carboxylate + L-aspartate + ATP = (2S)-2-[5-amino-1-(5-phospho-beta-D-ribosyl)imidazole-4-carboxamido]succinate + ADP + phosphate + 2 H(+). It functions in the pathway purine metabolism; IMP biosynthesis via de novo pathway; 5-amino-1-(5-phospho-D-ribosyl)imidazole-4-carboxamide from 5-amino-1-(5-phospho-D-ribosyl)imidazole-4-carboxylate: step 1/2. The chain is Phosphoribosylaminoimidazole-succinocarboxamide synthase from Legionella pneumophila (strain Paris).